An 83-amino-acid polypeptide reads, in one-letter code: Large ribosomal subunit protein bL31B (83 aa).

Belongs to the bacterial ribosomal protein bL31 family. Type B subfamily. In terms of assembly, part of the 50S ribosomal subunit.

The polypeptide is Large ribosomal subunit protein bL31B (Leifsonia xyli subsp. xyli (strain CTCB07)).